The primary structure comprises 297 residues: N-acetylmuramoyl-L-alanine amidase XlyA (297 aa).

The signal sequence occupies residues 1–44 (MVNIIQDFIPVGANNRPGYAMTPLYITVHNTANTAVGADAAAHA). An N-acetylmuramoyl-L-alanine amidase domain is found at 45-140 (RYLKNPDTTT…KYWSGKECPR (96 aa)). Positions 159-203 (QTYVVKQGDTLTSIARAFGVTVAQLQEWNNIEDPNLIRVGQVLIV) constitute a LysM domain.

The protein belongs to the N-acetylmuramoyl-L-alanine amidase 2 family.

The protein resides in the secreted. The enzyme catalyses Hydrolyzes the link between N-acetylmuramoyl residues and L-amino acid residues in certain cell-wall glycopeptides.. Its function is as follows. Autolysins are involved in some important biological processes such as cell separation, cell-wall turnover, competence for genetic transformation, formation of the flagella and sporulation. This Bacillus subtilis (strain 168) protein is N-acetylmuramoyl-L-alanine amidase XlyA (xlyA).